Here is a 183-residue protein sequence, read N- to C-terminus: Holliday junction branch migration complex subunit RuvA (183 aa).

Residues 1–63 (MIVGLIGVVE…EDAHLLYGFL (63 aa)) are domain I. The domain II stretch occupies residues 64–141 (EEGEKILFER…IQDETKPMHN (78 aa)). A region of interest (flexible linker) is located at residue N141. Positions 141–183 (NEVFLALESLGFKSAEINKVLKTLKPSLSIEAAIKEALQQLRS) are domain III.

Belongs to the RuvA family. As to quaternary structure, homotetramer. Forms an RuvA(8)-RuvB(12)-Holliday junction (HJ) complex. HJ DNA is sandwiched between 2 RuvA tetramers; dsDNA enters through RuvA and exits via RuvB. An RuvB hexamer assembles on each DNA strand where it exits the tetramer. Each RuvB hexamer is contacted by two RuvA subunits (via domain III) on 2 adjacent RuvB subunits; this complex drives branch migration. In the full resolvosome a probable DNA-RuvA(4)-RuvB(12)-RuvC(2) complex forms which resolves the HJ.

It localises to the cytoplasm. The RuvA-RuvB-RuvC complex processes Holliday junction (HJ) DNA during genetic recombination and DNA repair, while the RuvA-RuvB complex plays an important role in the rescue of blocked DNA replication forks via replication fork reversal (RFR). RuvA specifically binds to HJ cruciform DNA, conferring on it an open structure. The RuvB hexamer acts as an ATP-dependent pump, pulling dsDNA into and through the RuvAB complex. HJ branch migration allows RuvC to scan DNA until it finds its consensus sequence, where it cleaves and resolves the cruciform DNA. This Helicobacter pylori (strain G27) protein is Holliday junction branch migration complex subunit RuvA.